Here is a 361-residue protein sequence, read N- to C-terminus: Chorismate synthase (361 aa).

Residues Thr-37 to Arg-59 form a disordered region. Over residues Asp-40–Arg-49 the composition is skewed to basic and acidic residues. Arg-48 and Arg-54 together coordinate NADP(+). FMN-binding positions include Arg-125 to Ser-127, Asn-238 to Ala-239, Gly-278, Lys-293 to Ser-297, and Arg-319.

The protein belongs to the chorismate synthase family. Homotetramer. It depends on FMNH2 as a cofactor.

The catalysed reaction is 5-O-(1-carboxyvinyl)-3-phosphoshikimate = chorismate + phosphate. The protein operates within metabolic intermediate biosynthesis; chorismate biosynthesis; chorismate from D-erythrose 4-phosphate and phosphoenolpyruvate: step 7/7. Its function is as follows. Catalyzes the anti-1,4-elimination of the C-3 phosphate and the C-6 proR hydrogen from 5-enolpyruvylshikimate-3-phosphate (EPSP) to yield chorismate, which is the branch point compound that serves as the starting substrate for the three terminal pathways of aromatic amino acid biosynthesis. This reaction introduces a second double bond into the aromatic ring system. The sequence is that of Chorismate synthase from Erwinia tasmaniensis (strain DSM 17950 / CFBP 7177 / CIP 109463 / NCPPB 4357 / Et1/99).